Here is a 791-residue protein sequence, read N- to C-terminus: Lon protease (791 aa).

Positions 3-209 (KPILISRAIV…TILHLLFDQL (207 aa)) constitute a Lon N-terminal domain. 365–372 (GPPGVGKT) contributes to the ATP binding site. The Lon proteolytic domain occupies 605-790 (TTIPGIVNGM…DEVYNIVFGE (186 aa)). Catalysis depends on residues Ser696 and Lys739.

This sequence belongs to the peptidase S16 family. As to quaternary structure, homohexamer. Organized in a ring with a central cavity.

Its subcellular location is the cytoplasm. The enzyme catalyses Hydrolysis of proteins in presence of ATP.. In terms of biological role, ATP-dependent serine protease that mediates the selective degradation of mutant and abnormal proteins as well as certain short-lived regulatory proteins. Required for cellular homeostasis and for survival from DNA damage and developmental changes induced by stress. Degrades polypeptides processively to yield small peptide fragments that are 5 to 10 amino acids long. Binds to DNA in a double-stranded, site-specific manner. The chain is Lon protease from Ureaplasma parvum serovar 3 (strain ATCC 27815 / 27 / NCTC 11736).